We begin with the raw amino-acid sequence, 165 residues long: Neurotrophin-3 (165 aa).

Residues 1 to 3 (IQS) form the signal peptide. Residues 4–119 (TSMDQGSLTE…VLNRTSRRKR (116 aa)) constitute a propeptide that is removed on maturation. N112 carries an N-linked (GlcNAc...) asparagine glycan.

Belongs to the NGF-beta family.

It is found in the secreted. Its function is as follows. Seems to promote the survival of visceral and proprioceptive sensory neurons. The chain is Neurotrophin-3 (NTF3) from Calabaria reinhardtii (Calabar boa).